The primary structure comprises 257 residues: Ditrans,polycis-undecaprenyl-diphosphate synthase ((2E,6E)-farnesyl-diphosphate specific) (257 aa).

Asp-34 is an active-site residue. Asp-34 serves as a coordination point for Mg(2+). Residues 35-38, Trp-39, Arg-47, and His-51 contribute to the substrate site; that span reads GNGR. Asn-82 functions as the Proton acceptor in the catalytic mechanism. Substrate contacts are provided by residues Trp-83, Arg-85, Arg-201, and 207 to 209; that span reads RLS. Position 220 (Glu-220) interacts with Mg(2+).

It belongs to the UPP synthase family. Homodimer. Mg(2+) serves as cofactor.

The catalysed reaction is 8 isopentenyl diphosphate + (2E,6E)-farnesyl diphosphate = di-trans,octa-cis-undecaprenyl diphosphate + 8 diphosphate. Catalyzes the sequential condensation of isopentenyl diphosphate (IPP) with (2E,6E)-farnesyl diphosphate (E,E-FPP) to yield (2Z,6Z,10Z,14Z,18Z,22Z,26Z,30Z,34E,38E)-undecaprenyl diphosphate (di-trans,octa-cis-UPP). UPP is the precursor of glycosyl carrier lipid in the biosynthesis of bacterial cell wall polysaccharide components such as peptidoglycan and lipopolysaccharide. The protein is Ditrans,polycis-undecaprenyl-diphosphate synthase ((2E,6E)-farnesyl-diphosphate specific) of Francisella tularensis subsp. tularensis (strain SCHU S4 / Schu 4).